A 151-amino-acid polypeptide reads, in one-letter code: Probable calcium-binding protein CML31 (151 aa).

EF-hand domains follow at residues 14–42, 44–79, 84–119, and 120–151; these read ALFA…TLGE, VSDE…AEVE, RRGT…LGSD, and QDID…MMNA. Positions 20, 22, 24, 26, 31, 57, 59, 61, and 68 each coordinate Ca(2+). Residues aspartate 133, asparagine 135, aspartate 137, and glutamate 144 each coordinate Ca(2+).

Functionally, potential calcium sensor. The chain is Probable calcium-binding protein CML31 (CML31) from Oryza sativa subsp. japonica (Rice).